Consider the following 387-residue polypeptide: MEQNRFKKETKTCSASWPRAPQSTLCATDRLELTYDVYTSAERQRRSRTATRLNLVFLHGSGMSKVVWEYYLPRLVAADAEGNYAIDKVLLIDQVNHGDSAVRNRGRLGTNFNWIDGARDVLKIATCELGSIDSHPALNVVIGHSMGGFQALACDVLQPNLFHLLILIEPVVITRKAIGAGRPGLPPDSPQIPENLYNSLRLKTCDHFANESEYVKYMRNGSFFTNAHSQILQNIIDFERTKASGDDEDGGPVRTKMEQAQNLLCYMNMQTFAPFLISNVKFVRKRTIHIVGARSNWCPPQNQLFLQKTLQNYHLDVIPGGSHLVNVEAPDLVIERINHHIHEFVLTSPLQSSHIPQLTLEERAVMFDRAFDSFKNEALVKTTKQKL.

Residues 385–387 (QKL) are peroxisomal targeting signal type 1.

Its subcellular location is the peroxisome matrix. Functionally, has acyl esterase, lipase and phospholipase A activity. The polypeptide is Peroxisomal membrane protein LPX1 (LPX1) (Saccharomyces cerevisiae (strain ATCC 204508 / S288c) (Baker's yeast)).